The sequence spans 406 residues: Probable delta-aminolevulinic acid dehydratase 2, chloroplastic (406 aa).

A chloroplast-targeting transit peptide spans 1-34 (MTSSMFRSPCKIPSVKGFEQKSYVGLKAASYNVR). Lysine 275 (schiff-base intermediate with substrate) is an active-site residue. Positions 285 and 291 each coordinate 5-aminolevulinate. Glutamate 307 is a Mg(2+) binding site. Residue lysine 322 is the Schiff-base intermediate with substrate of the active site. Residues serine 348 and tyrosine 387 each contribute to the 5-aminolevulinate site.

The protein belongs to the ALAD family. Homooctamer. It depends on Mg(2+) as a cofactor.

Its subcellular location is the plastid. It is found in the chloroplast. It carries out the reaction 2 5-aminolevulinate = porphobilinogen + 2 H2O + H(+). The protein operates within porphyrin-containing compound metabolism; protoporphyrin-IX biosynthesis; coproporphyrinogen-III from 5-aminolevulinate: step 1/4. It participates in porphyrin-containing compound metabolism; chlorophyll biosynthesis. Catalyzes an early step in the biosynthesis of tetrapyrroles. Binds two molecules of 5-aminolevulinate per subunit, each at a distinct site, and catalyzes their condensation to form porphobilinogen. This chain is Probable delta-aminolevulinic acid dehydratase 2, chloroplastic (HEMB2), found in Arabidopsis thaliana (Mouse-ear cress).